The chain runs to 1692 residues: Fatty acid synthase alpha subunit hexA (1692 aa).

Residues 44–80 (AVEEPVDETPAPETAPERPPLSRAKTAAVKPQETAAP) form a disordered region. The region spanning 90-174 (LSAEEIVRAL…RVSSALLSKL (85 aa)) is the Carrier domain. Ser125 carries the O-(pantetheine 4'-phosphoryl)serine modification. The interval 508-746 (FAGKNILITG…IAMLMTPELV (239 aa)) is ketoreductase (KR) domain. The region spanning 948-1430 (KEYLHEVAVE…QKGGQVVGVA (483 aa)) is the Ketosynthase family 3 (KS3) domain. Cys1135 serves as the catalytic For beta-ketoacyl synthase activity. Residues 1263-1287 (GQAQLDKSSPSTNTTSRTSSVSLAR) form a disordered region. A compositionally biased stretch (low complexity) spans 1270 to 1284 (SSPSTNTTSRTSSVS). Catalysis depends on for beta-ketoacyl synthase activity residues His1315 and His1356. Asp1569 serves as a coordination point for Mg(2+). Residues 1569–1571 (DLV), 1615–1625 (EAVFKCLHTQT), 1639–1642 (KSDN), and 1668–1670 (ISH) contribute to the acetyl-CoA site. Ser1669 contacts Mg(2+).

This sequence belongs to the thiolase-like superfamily. Fungal fatty acid synthetase subunit alpha family. As to quaternary structure, [Alpha(6)beta(6)] hexamers of two multifunctional subunits (alpha and beta). 4'-phosphopantetheine is transferred from CoA to a specific serine of the acyl carrier domain by the C-terminal PPT domain. This modification is essential for activity because fatty acids are bound in thioester linkage to the sulfhydryl of the prosthetic group.

It carries out the reaction acetyl-CoA + n malonyl-CoA + 2n NADPH + 4n H(+) = a long-chain-acyl-CoA + n CoA + n CO2 + 2n NADP(+).. The catalysed reaction is a fatty acyl-[ACP] + malonyl-[ACP] + H(+) = a 3-oxoacyl-[ACP] + holo-[ACP] + CO2. The enzyme catalyses a (3R)-hydroxyacyl-[ACP] + NADP(+) = a 3-oxoacyl-[ACP] + NADPH + H(+). The protein operates within mycotoxin biosynthesis. Functionally, fatty acid synthase alpha subunit; part of the fragmented gene cluster that mediates the biosynthesis of dothistromin (DOTH), a polyketide toxin very similar in structure to the aflatoxin precursor, versicolorin B. The first step of the pathway is the conversion of acetate to norsolorinic acid (NOR) and requires the fatty acid synthase subunits hexA and hexB, as well as the polyketide synthase pksA. PksA combines a hexanoyl starter unit and 7 malonyl-CoA extender units to synthesize the precursor NOR. The hexanoyl starter unit is provided to the acyl-carrier protein (ACP) domain by the fungal fatty acid synthase hexA/hexB. The second step is the conversion of NOR to averantin (AVN) and requires the norsolorinic acid ketoreductase nor1, which catalyzes the dehydration of norsolorinic acid to form (1'S)-averantin. The cytochrome P450 monooxygenase avnA then catalyzes the hydroxylation of AVN to 5'hydroxyaverantin (HAVN). The next step is performed by adhA that transforms HAVN to averufin (AVF). Averufin might then be converted to hydroxyversicolorone by cypX and avfA. Hydroxyversicolorone is further converted versiconal hemiacetal acetate (VHA) by moxY. VHA is then the substrate for the versiconal hemiacetal acetate esterase est1 to yield versiconal (VAL). Versicolorin B synthase vbsA then converts VAL to versicolorin B (VERB) by closing the bisfuran ring. Then, the activity of the versicolorin B desaturase verB leads to versicolorin A (VERA). DotB, a predicted chloroperoxidase, may perform epoxidation of the A-ring of VERA. Alternatively, a cytochrome P450, such as cypX or avnA could catalyze this step. It is also possible that another, uncharacterized, cytochrome P450 enzyme is responsible for this step. Opening of the epoxide could potentially be achieved by the epoxide hydrolase epoA. However, epoA seems not to be required for DOTH biosynthesis, but other epoxide hydrolases may have the ability to complement this hydrolysis. Alternatively, opening of the epoxide ring could be achieved non-enzymatically. The next step is the deoxygenation of ring A to yield the 5,8-dihydroxyanthraquinone which is most likely catalyzed by the NADPH dehydrogenase encoded by ver1. The last stages of DOTH biosynthesis are proposed to involve hydroxylation of the bisfuran. OrdB and norB might have oxidative roles here. An alternative possibility is that cytochrome P450 monoogenases such as avnA and cypX might perform these steps in addition to previously proposed steps. In Dothistroma septosporum (strain NZE10 / CBS 128990) (Red band needle blight fungus), this protein is Fatty acid synthase alpha subunit hexA.